We begin with the raw amino-acid sequence, 183 residues long: uncharacterized protein (183 aa).

Residues 7–23 (LFFTALCFGLTGCIAPP) traverse the membrane as a helical segment.

It is found in the membrane. This is an uncharacterized protein from Haemophilus influenzae (strain ATCC 51907 / DSM 11121 / KW20 / Rd).